The primary structure comprises 475 residues: MSPQTETKASSGFKAGVKDYRLTYYTPDYKVSDTDILAAFRMTPQPGVPPEEAGAAVAAESSTGTWTTVWTDGLTSLDRYKGRCYGIEPVAGEENQYIAYVAYPLDLFEEGSVTNMFTSIVGNVFGFKALRALRLEDLRIPPAYSKTFMGPPHGIQVERDKLNKYGRPLLGCTIKPKLGLSAKNYGRAVYECLRGGLDFTKDDENVNSQPFMRWRDRFLFVAEALFKSQAETGEIKGHYLNATAGTCEEMMKRAVFARELGAPIVMHDYLTGGFTANTSLAFYCRDNGLLLHIHRAMHAVIDRQRNHGMHFRVLAKALRMSGGDHVHAGTVVGKLEGERDVTLGFVDLLRDDYIEKDRSRGVYFTQDWVSMPGVLPVASGGIHVWHMPALTEIFGDDSVLQFGGGTLGHPWGNAPGAVANRVALEACVQARNEGRDLAREGNDIIREASKWSPELAAACEVWKEIKFVFDTIDVL.

Positions 1–2 are excised as a propeptide; sequence MS. Position 3 is an N-acetylproline (Pro-3). Lys-14 bears the N6,N6,N6-trimethyllysine mark. Substrate-binding residues include Asn-123 and Thr-173. Lys-175 (proton acceptor) is an active-site residue. Lys-177 serves as a coordination point for substrate. Mg(2+) is bound by residues Lys-201, Asp-203, and Glu-204. The residue at position 201 (Lys-201) is an N6-carboxylysine. Residue His-294 is the Proton acceptor of the active site. 3 residues coordinate substrate: Arg-295, His-327, and Ser-379.

This sequence belongs to the RuBisCO large chain family. Type I subfamily. As to quaternary structure, heterohexadecamer of 8 large chains and 8 small chains; disulfide-linked. The disulfide link is formed within the large subunit homodimers. Mg(2+) is required as a cofactor. The disulfide bond which can form in the large chain dimeric partners within the hexadecamer appears to be associated with oxidative stress and protein turnover.

The protein resides in the plastid. It is found in the chloroplast. It carries out the reaction 2 (2R)-3-phosphoglycerate + 2 H(+) = D-ribulose 1,5-bisphosphate + CO2 + H2O. The catalysed reaction is D-ribulose 1,5-bisphosphate + O2 = 2-phosphoglycolate + (2R)-3-phosphoglycerate + 2 H(+). RuBisCO catalyzes two reactions: the carboxylation of D-ribulose 1,5-bisphosphate, the primary event in carbon dioxide fixation, as well as the oxidative fragmentation of the pentose substrate in the photorespiration process. Both reactions occur simultaneously and in competition at the same active site. The sequence is that of Ribulose bisphosphate carboxylase large chain from Psilotum nudum (Whisk fern).